Reading from the N-terminus, the 349-residue chain is Dihydroorotase (349 aa).

Zn(2+) contacts are provided by H17 and H19. Substrate is bound by residues 19 to 21 (HLR) and N45. 3 residues coordinate Zn(2+): K105, H142, and H180. An N6-carboxylysine modification is found at K105. Substrate is bound at residue H142. Substrate is bound at residue L225. Zn(2+) is bound at residue D253. D253 is an active-site residue. Residues H257 and A269 each coordinate substrate.

This sequence belongs to the metallo-dependent hydrolases superfamily. DHOase family. Class II DHOase subfamily. In terms of assembly, homodimer. Requires Zn(2+) as cofactor.

It catalyses the reaction (S)-dihydroorotate + H2O = N-carbamoyl-L-aspartate + H(+). The protein operates within pyrimidine metabolism; UMP biosynthesis via de novo pathway; (S)-dihydroorotate from bicarbonate: step 3/3. Its function is as follows. Catalyzes the reversible cyclization of carbamoyl aspartate to dihydroorotate. The sequence is that of Dihydroorotase from Nitrosomonas europaea (strain ATCC 19718 / CIP 103999 / KCTC 2705 / NBRC 14298).